We begin with the raw amino-acid sequence, 201 residues long: MSFATLRPAPPGRYLYPEVSPLSEDEDRGSDSSGSDEKPCRVHAARCGLQGARRRAGGRRAGGGGPGGRPGREPRQRHTANARERDRTNSVNTAFTALRTLIPTEPADRKLSKIETLRLASSYISHLGNVLLAGEACGDGQPCHSGPAFFHAARAGSPPPPPPPPPARDGENTQPKQICTFCLSNQRKLSKDRDRKTAIRS.

Disordered stretches follow at residues 1-92 (MSFA…NSVN) and 148-177 (AFFHAARAGSPPPPPPPPPARDGENTQPKQ). Residues 59–69 (RRAGGGGPGGR) show a composition bias toward gly residues. Residues 70–88 (PGREPRQRHTANARERDRT) show a composition bias toward basic and acidic residues. The region spanning 75–127 (RQRHTANARERDRTNSVNTAFTALRTLIPTEPADRKLSKIETLRLASSYISHL) is the bHLH domain. Positions 157–167 (SPPPPPPPPPA) are enriched in pro residues.

In terms of assembly, efficient DNA binding requires dimerization with another bHLH protein. Dimerizes and binds the E-box consensus sequence with E12.

It localises to the nucleus. Functionally, plays an early essential role in mesoderm formation, as well as a later role in formation of somite-derived chondrogenic lineages. This is Basic helix-loop-helix transcription factor scleraxis (SCX) from Homo sapiens (Human).